Here is a 252-residue protein sequence, read N- to C-terminus: Probable transcriptional regulatory protein Npun_R5651 (252 aa).

This sequence belongs to the TACO1 family.

The protein resides in the cytoplasm. The protein is Probable transcriptional regulatory protein Npun_R5651 of Nostoc punctiforme (strain ATCC 29133 / PCC 73102).